We begin with the raw amino-acid sequence, 201 residues long: Probable chemoreceptor glutamine deamidase CheD 1 (201 aa).

It belongs to the CheD family.

The enzyme catalyses L-glutaminyl-[protein] + H2O = L-glutamyl-[protein] + NH4(+). Probably deamidates glutamine residues to glutamate on methyl-accepting chemotaxis receptors (MCPs), playing an important role in chemotaxis. This Geobacter sulfurreducens (strain ATCC 51573 / DSM 12127 / PCA) protein is Probable chemoreceptor glutamine deamidase CheD 1.